The chain runs to 370 residues: Aspartate beta-hydroxylase domain-containing protein 2 (370 aa).

Topologically, residues Met1–Asn57 are cytoplasmic. A helical membrane pass occupies residues Ser58–Val78. Residues Gly79–Arg370 are Lumenal-facing. The N-linked (GlcNAc...) asparagine glycan is linked to Asn212. 2-oxoglutarate is bound by residues Trp229 and Ser273. His284 is a Fe cation binding site. Arg293 to His295 provides a ligand contact to 2-oxoglutarate. Residue His329 participates in Fe cation binding. Arg342 serves as a coordination point for 2-oxoglutarate.

Belongs to the aspartyl/asparaginyl beta-hydroxylase family. It depends on Fe cation as a cofactor.

It localises to the membrane. In terms of biological role, may function as 2-oxoglutarate-dependent dioxygenase. This chain is Aspartate beta-hydroxylase domain-containing protein 2 (asphd2), found in Xenopus tropicalis (Western clawed frog).